Consider the following 325-residue polypeptide: Olfactory receptor 1S1 (325 aa).

Topologically, residues 1–38 are extracellular; the sequence is MKTFSSFLQIGRNMHQGNQTTITEFILLGFFKQDEHQN. Asn-18 carries an N-linked (GlcNAc...) asparagine glycan. Residues 39–62 form a helical membrane-spanning segment; that stretch reads LLFVLFLGMYLVTVIGNGLIIVAI. The Cytoplasmic segment spans residues 63–70; sequence SLDTYLHT. The helical transmembrane segment at 71-92 threads the bilayer; that stretch reads PMYLFLANLSFADISSISNSVP. At 93–113 the chain is on the extracellular side; it reads KMLVNIQTKSQSISYESCITQ. The cysteines at positions 110 and 202 are disulfide-linked. A helical transmembrane segment spans residues 114 to 133; it reads MYFSIVFVVIDNLLLGTMAY. Residues 134–152 are Cytoplasmic-facing; it reads DHFVAICHPLNYTILMRPR. A helical membrane pass occupies residues 153 to 171; that stretch reads FGILLTVISWFLSNIIALT. Residues 172–208 are Extracellular-facing; that stretch reads HTLLLIQLLFCNHNTLPHFFCDLAPLLKLSCSDTLIN. Residues 209–232 traverse the membrane as a helical segment; that stretch reads ELVLFIVGLSVIIFPFTLSFFSYV. Over 233-249 the chain is Cytoplasmic; the sequence is CIIRAVLRVSSTQGKWK. The helical transmembrane segment at 250–272 threads the bilayer; sequence AFSTCGSHLTVVLLFYGTIVGVY. Residues 273–285 are Extracellular-facing; it reads FFPSSTHPEDTDK. Residues 286 to 305 form a helical membrane-spanning segment; that stretch reads IGAVLFTVVTPMINPFIYSL. Residues 306 to 325 lie on the Cytoplasmic side of the membrane; the sequence is RNKDMKGALRKLINRKISSL.

Belongs to the G-protein coupled receptor 1 family.

It is found in the cell membrane. Its function is as follows. Odorant receptor. The polypeptide is Olfactory receptor 1S1 (OR1S1) (Homo sapiens (Human)).